Reading from the N-terminus, the 417-residue chain is Leucine-rich repeat-containing protein 42 (417 aa).

4 LRR repeats span residues 167–188 (CLHS…LAHL), 195–215 (SLTE…QKMT), 227–248 (KLKV…CFLF), and 252–273 (LLKF…LKKI). The tract at residues 360 to 390 (FFRPKEQKDPDSSNSEKRRHSTKRTGADCVQ) is disordered. A compositionally biased stretch (basic and acidic residues) spans 362–375 (RPKEQKDPDSSNSE).

The protein belongs to the LRRC42 family.

This is Leucine-rich repeat-containing protein 42 (lrrc42) from Xenopus laevis (African clawed frog).